We begin with the raw amino-acid sequence, 130 residues long: Small ribosomal subunit protein uS9 (130 aa).

It belongs to the universal ribosomal protein uS9 family.

The chain is Small ribosomal subunit protein uS9 from Nitrosomonas eutropha (strain DSM 101675 / C91 / Nm57).